The sequence spans 312 residues: Urease accessory protein UreD (312 aa).

The segment covering 1-15 (MLAEQFTDKNKHAEQ) has biased composition (basic and acidic residues). The tract at residues 1–24 (MLAEQFTDKNKHAEQELSPGSSAV) is disordered.

It belongs to the UreD family. As to quaternary structure, ureD, UreF and UreG form a complex that acts as a GTP-hydrolysis-dependent molecular chaperone, activating the urease apoprotein by helping to assemble the nickel containing metallocenter of UreC. The UreE protein probably delivers the nickel.

Its subcellular location is the cytoplasm. Functionally, required for maturation of urease via the functional incorporation of the urease nickel metallocenter. The chain is Urease accessory protein UreD from Hahella chejuensis (strain KCTC 2396).